A 391-amino-acid polypeptide reads, in one-letter code: MTRVGILLMNLGGPERIKDVGPFLYNLFSDPEIIRIPIPFFQKPLAWLISTLRSSRSQQAYQSIGGGSPLRRITEQQARELQSELRQRGVNATSYVAMRYWHPFTESAVSDIKADGINQVVVLPLYPQFSISTSGSSFRELRRLREADPQFRKLPIRCIRSWFNNEGYIASMAKLIEDEILLCNDPENAHIFFTAHGVPKSYVEEAGDPYKDEIEDCSILIIDQLEKALGYINPYTLSYQSRVGPEEWLQPYTEDVLAELGESGTKELVVVPISFVSEHIETLQEIDIEYKEIAKEHGIDNFRRVRALDTYPMFIKGLADLVTSCLEGPEISLDEASKLPDRVKLYPQEKWQWGWNNSAEVWNGRVAMFVFIICLLELVIGNGPLHYLGLL.

Histidine 196 and glutamate 281 together coordinate Fe cation.

This sequence belongs to the ferrochelatase family.

The protein localises to the cytoplasm. The enzyme catalyses heme b + 2 H(+) = protoporphyrin IX + Fe(2+). It participates in porphyrin-containing compound metabolism; protoheme biosynthesis; protoheme from protoporphyrin-IX: step 1/1. Functionally, catalyzes the ferrous insertion into protoporphyrin IX. The chain is Ferrochelatase from Prochlorococcus marinus (strain MIT 9211).